The primary structure comprises 459 residues: Interleukin-7 receptor subunit alpha (459 aa).

Residues 1-20 (MTILGTTFGVFFSLLQVVSG) form the signal peptide. Residues 21–241 (ESGYAQNGDL…NNHSGETNPT (221 aa)) lie on the Extracellular side of the membrane. A disulfide bond links C42 and C57. Residues N49 and N65 are each glycosylated (N-linked (GlcNAc...) asparagine). Disulfide bonds link C74/C82 and C108/C118. Residues 131–231 (APFDLSVIYR…PSYYFRTPEI (101 aa)) form the Fibronectin type-III domain. An N-linked (GlcNAc...) asparagine glycan is attached at N182. The WSXWS motif motif lies at 217 to 221 (WSEWS). Residues 242–262 (LLTISILSVLSVVLLVILACV) traverse the membrane as a helical segment. The Cytoplasmic segment spans residues 263–459 (LWKKRIKPII…VTMSSFCQKR (197 aa)). The short motif at 272–280 (IWPSLPDHK) is the Box 1 motif element. T282 carries the phosphothreonine; by PKC modification. Positions 327-357 (TVPPQLEESETQRPGGDVQSPSWPSENVVTT) are disordered. Over residues 345–357 (QSPSWPSENVVTT) the composition is skewed to polar residues.

This sequence belongs to the type I cytokine receptor family. Type 4 subfamily. In terms of assembly, the IL7 receptor is a heterodimer of IL7R and IL2RG. The TSLP receptor is a heterodimer of CRLF2 and IL7R. Interacts with CD53. In terms of processing, N-glycosylated IL-7Ralpha binds IL7 300-fold more tightly than the unglycosylated form. Post-translationally, ubiquitinated by MARCHF8; leading to lysosomal degradation.

It localises to the cell membrane. Receptor for interleukin-7. Also acts as a receptor for thymic stromal lymphopoietin (TSLP). The polypeptide is Interleukin-7 receptor subunit alpha (IL7R) (Callithrix jacchus (White-tufted-ear marmoset)).